The primary structure comprises 332 residues: Biotin synthase (332 aa).

The Radical SAM core domain maps to 53 to 282 (HFGKKVKLNM…TKEIRISGGR (230 aa)). [4Fe-4S] cluster is bound by residues cysteine 71, cysteine 75, and cysteine 78. Positions 115, 147, 207, and 277 each coordinate [2Fe-2S] cluster.

It belongs to the radical SAM superfamily. Biotin synthase family. Homodimer. [4Fe-4S] cluster serves as cofactor. Requires [2Fe-2S] cluster as cofactor.

The enzyme catalyses (4R,5S)-dethiobiotin + (sulfur carrier)-SH + 2 reduced [2Fe-2S]-[ferredoxin] + 2 S-adenosyl-L-methionine = (sulfur carrier)-H + biotin + 2 5'-deoxyadenosine + 2 L-methionine + 2 oxidized [2Fe-2S]-[ferredoxin]. It participates in cofactor biosynthesis; biotin biosynthesis; biotin from 7,8-diaminononanoate: step 2/2. Functionally, catalyzes the conversion of dethiobiotin (DTB) to biotin by the insertion of a sulfur atom into dethiobiotin via a radical-based mechanism. This Bacillus cereus (strain ATCC 10987 / NRS 248) protein is Biotin synthase.